The sequence spans 382 residues: D-galactonate dehydratase (382 aa).

Mg(2+) is bound at residue aspartate 183. The Proton donor role is filled by histidine 185. The Mg(2+) site is built by glutamate 209 and glutamate 235. Residue histidine 285 is the Proton acceptor of the active site. The interval 361-382 (NENPPDWRNPVWRHSDGSIAEW) is disordered.

It belongs to the mandelate racemase/muconate lactonizing enzyme family. GalD subfamily. It depends on Mg(2+) as a cofactor.

The enzyme catalyses D-galactonate = 2-dehydro-3-deoxy-D-galactonate + H2O. It participates in carbohydrate acid metabolism; D-galactonate degradation; D-glyceraldehyde 3-phosphate and pyruvate from D-galactonate: step 1/3. Functionally, catalyzes the dehydration of D-galactonate to 2-keto-3-deoxy-D-galactonate. This Xanthomonas oryzae pv. oryzae (strain MAFF 311018) protein is D-galactonate dehydratase.